The sequence spans 117 residues: Large ribosomal subunit protein eL22 (117 aa).

A phosphoserine mark is found at Ser49 and Ser50.

Belongs to the eukaryotic ribosomal protein eL22 family. In terms of assembly, component of the large ribosomal subunit (LSU). Mature yeast ribosomes consist of a small (40S) and a large (60S) subunit. The 40S small subunit contains 1 molecule of ribosomal RNA (18S rRNA) and at least 33 different proteins. The large 60S subunit contains 3 rRNA molecules (25S, 5.8S and 5S rRNA) and at least 46 different proteins.

It localises to the cytoplasm. The protein resides in the nucleus. It is found in the nucleolus. Its function is as follows. Component of the ribosome, a large ribonucleoprotein complex responsible for the synthesis of proteins in the cell. The small ribosomal subunit (SSU) binds messenger RNAs (mRNAs) and translates the encoded message by selecting cognate aminoacyl-transfer RNA (tRNA) molecules. The large subunit (LSU) contains the ribosomal catalytic site termed the peptidyl transferase center (PTC), which catalyzes the formation of peptide bonds, thereby polymerizing the amino acids delivered by tRNAs into a polypeptide chain. The nascent polypeptides leave the ribosome through a tunnel in the LSU and interact with protein factors that function in enzymatic processing, targeting, and the membrane insertion of nascent chains at the exit of the ribosomal tunnel. This Schizosaccharomyces pombe (strain 972 / ATCC 24843) (Fission yeast) protein is Large ribosomal subunit protein eL22 (rpl22).